We begin with the raw amino-acid sequence, 591 residues long: CTP synthase 1 (591 aa).

The region spanning 300 to 554 is the Glutamine amidotransferase type-1 domain; that stretch reads SIALVGKYTK…LAAAGRLQSY (255 aa). Residues Cys-399, His-526, and Glu-528 each act as for GATase activity in the active site. 2 positions are modified to phosphoserine: Ser-571 and Ser-575.

It belongs to the CTP synthase family.

The catalysed reaction is UTP + L-glutamine + ATP + H2O = CTP + L-glutamate + ADP + phosphate + 2 H(+). The protein operates within pyrimidine metabolism; CTP biosynthesis via de novo pathway; CTP from UDP: step 2/2. This enzyme is involved in the de novo synthesis of CTP, a precursor of DNA, RNA and phospholipids. Catalyzes the ATP-dependent amination of UTP to CTP with either L-glutamine or ammonia as a source of nitrogen. This chain is CTP synthase 1 (ctps1), found in Danio rerio (Zebrafish).